The chain runs to 479 residues: Phosphatidylinositol 4-kinase type 2-alpha (479 aa).

At methionine 1 the chain carries N-acetylmethionine. The segment at 1-74 (MDETSPLVSP…ARGAAAQGQT (74 aa)) is disordered. Serine 5, serine 9, serine 44, serine 47, and serine 51 each carry phosphoserine. Over residues 31–45 (VPGGAVRVAAAAGSG) the composition is skewed to low complexity. Positions 53 to 66 (GHDRERQPLLDRAR) are enriched in basic and acidic residues. Residues 124–453 (CIFPERIYQG…VQMPPVIVET (330 aa)) enclose the PI3K/PI4K catalytic domain. Residues 130–136 (IYQGSSG) form a G-loop region. Residues 131–137 (YQGSSGS) and lysine 152 each bind ATP. The tract at residues 157 to 159 (EPY) is important for substrate binding. Residues 165–178 (KWTKWLQKLCCPCC) are important for interaction with membranes. Residues cysteine 174, cysteine 175, cysteine 177, and cysteine 178 are each lipidated (S-palmitoyl cysteine). Residue 261 to 264 (QLFV) participates in ATP binding. Positions 268–276 (KDADYWLRR) are important for interaction with membranes. A catalytic loop region spans residues 305–313 (RNTDRGNDN). Residues 344-364 (AIDNGLAFPLKHPDSWRAYPF) are activation loop. Aspartate 346 is a binding site for ATP. The interval 359–368 (WRAYPFYWAW) is important for interaction with membranes. Residue serine 462 is modified to Phosphoserine.

The protein belongs to the PI3/PI4-kinase family. Type II PI4K subfamily. In terms of assembly, associates with the BLOC-1 and the AP-3 complexes; the BLOC-1 complex is required for optimal binding of PI4K2A to the AP-3 complex. Interacts with BLOC1S5 and DTNBP1. Interacts with FOS; this interaction may enhance phosphatidylinositol phosphorylation activity. Interacts with ITCH. Interacts with ATG9A. Palmitoylated by ZDHHC3 and ZDHHC7 in the CCPCC motif. Palmitoylation is cholesterol-dependent, and required for TGN localization. Post-translationally, ubiquitinated by ITCH; this does not lead to proteasomal degradation. Widely expressed. Highest expression is observed in kidney, brain, heart, skeletal muscle, and placenta and lowest expression is observed in colon, thymus, and small intestine.

It localises to the golgi apparatus. Its subcellular location is the trans-Golgi network membrane. It is found in the membrane raft. The protein resides in the cell projection. The protein localises to the dendrite. It localises to the presynaptic cell membrane. Its subcellular location is the synapse. It is found in the synaptosome. The protein resides in the mitochondrion. The protein localises to the endosome. It localises to the endosome membrane. Its subcellular location is the cytoplasmic vesicle. It is found in the membrane. The protein resides in the cell membrane. The protein localises to the perikaryon. It localises to the neuron projection. The catalysed reaction is a 1,2-diacyl-sn-glycero-3-phospho-(1D-myo-inositol) + ATP = a 1,2-diacyl-sn-glycero-3-phospho-(1D-myo-inositol 4-phosphate) + ADP + H(+). In terms of biological role, membrane-bound phosphatidylinositol-4 kinase (PI4-kinase) that catalyzes the phosphorylation of phosphatidylinositol (PI) to phosphatidylinositol 4-phosphate (PI4P), a lipid that plays important roles in endocytosis, Golgi function, protein sorting and membrane trafficking and is required for prolonged survival of neurons. Besides, phosphorylation of phosphatidylinositol (PI) to phosphatidylinositol 4-phosphate (PI4P) is the first committed step in the generation of phosphatidylinositol 4,5-bisphosphate (PIP2), a precursor of the second messenger inositol 1,4,5-trisphosphate (InsP3). This is Phosphatidylinositol 4-kinase type 2-alpha (PI4K2A) from Homo sapiens (Human).